An 875-amino-acid polypeptide reads, in one-letter code: GATOR2 complex protein MIOS (875 aa).

6 WD repeats span residues S58–F100, K111–I155, G182–F221, N223–L261, E265–G306, and R395–T437. Residues V735 to P781 form a C4-type zinc finger. C737 and C740 together coordinate Zn(2+). S759 and S766 each carry phosphoserine. Zn(2+)-binding residues include C775, C778, C788, C827, C830, H832, H835, H838, C849, C854, and C858. The segment at L782–T863 adopts an RING-type; atypical zinc-finger fold.

It belongs to the WD repeat mio family. Component of the GATOR2 subcomplex, composed of MIOS, SEC13, SEH1L, WDR24 and WDR59. The GATOR2 complex interacts with CASTOR1 and CASTOR2; the interaction is negatively regulated by arginine. CASTOR1 and CASTOR2 convey leucine availability via direct interaction with MIOS. The GATOR2 complex interacts with SESN1, SESN2 and SESN3; the interaction is negatively regulated by amino acids. Interacts with SAR1A and SAR1B; the interaction is direct, disrupted by leucine and mediates the interaction of SAR1A or SAR1B with the GATOR2 complex to negatively regulate the TORC1 signaling upon leucine deprivation.

It localises to the lysosome membrane. With respect to regulation, the GATOR2 complex is negatively regulated by the upstream amino acid sensors CASTOR1 and SESN2, which sequester the GATOR2 complex in absence of amino acids. In the presence of abundant amino acids, GATOR2 is released from CASTOR1 and SESN2 and activated. Functionally, as a component of the GATOR2 complex, functions as an activator of the amino acid-sensing branch of the mTORC1 signaling pathway. The GATOR2 complex indirectly activates mTORC1 through the inhibition of the GATOR1 subcomplex. GATOR2 probably acts as an E3 ubiquitin-protein ligase toward GATOR1. In the presence of abundant amino acids, the GATOR2 complex mediates ubiquitination of the NPRL2 core component of the GATOR1 complex, leading to GATOR1 inactivation. In the absence of amino acids, GATOR2 is inhibited, activating the GATOR1 complex. Within the GATOR2 complex, MIOS is required to prevent autoubiquitination of WDR24, the catalytic subunit of the complex. The GATOR2 complex is required for brain myelination. This Homo sapiens (Human) protein is GATOR2 complex protein MIOS.